Consider the following 123-residue polypeptide: MEYSTFGKHIIVDLWGVDFSLLDDMHFLEYHLVTAADYSGAHVLNVSKKEFQPYGVTVLVLLSESHLSIHTYPEQNFAAIDCYTCGTTVEPQIAIDYIVNILKPERMHIKRLIRGIGEIVTAD.

Ser65 (schiff-base intermediate with substrate; via pyruvic acid) is an active-site residue. Ser65 carries the post-translational modification Pyruvic acid (Ser); by autocatalysis. The active-site Proton acceptor; for processing activity is His70. Catalysis depends on Cys85, which acts as the Proton donor; for catalytic activity.

This sequence belongs to the prokaryotic AdoMetDC family. Type 1 subfamily. As to quaternary structure, heterotetramer of two alpha and two beta chains arranged as a dimer of alpha/beta heterodimers. Pyruvate is required as a cofactor. In terms of processing, is synthesized initially as an inactive proenzyme. Formation of the active enzyme involves a self-maturation process in which the active site pyruvoyl group is generated from an internal serine residue via an autocatalytic post-translational modification. Two non-identical subunits are generated from the proenzyme in this reaction, and the pyruvate is formed at the N-terminus of the alpha chain, which is derived from the carboxyl end of the proenzyme. The post-translation cleavage follows an unusual pathway, termed non-hydrolytic serinolysis, in which the side chain hydroxyl group of the serine supplies its oxygen atom to form the C-terminus of the beta chain, while the remainder of the serine residue undergoes an oxidative deamination to produce ammonia and the pyruvoyl group blocking the N-terminus of the alpha chain.

The catalysed reaction is S-adenosyl-L-methionine + H(+) = S-adenosyl 3-(methylsulfanyl)propylamine + CO2. Its pathway is amine and polyamine biosynthesis; S-adenosylmethioninamine biosynthesis; S-adenosylmethioninamine from S-adenosyl-L-methionine: step 1/1. Catalyzes the decarboxylation of S-adenosylmethionine to S-adenosylmethioninamine (dcAdoMet), the propylamine donor required for the synthesis of the polyamines spermine and spermidine from the diamine putrescine. The protein is S-adenosylmethionine decarboxylase proenzyme 2 of Bacillus cereus (strain ATCC 14579 / DSM 31 / CCUG 7414 / JCM 2152 / NBRC 15305 / NCIMB 9373 / NCTC 2599 / NRRL B-3711).